The chain runs to 256 residues: Imidazole glycerol phosphate synthase subunit HisF (256 aa).

Active-site residues include Asp12 and Asp131.

Belongs to the HisA/HisF family. In terms of assembly, heterodimer of HisH and HisF.

It is found in the cytoplasm. The enzyme catalyses 5-[(5-phospho-1-deoxy-D-ribulos-1-ylimino)methylamino]-1-(5-phospho-beta-D-ribosyl)imidazole-4-carboxamide + L-glutamine = D-erythro-1-(imidazol-4-yl)glycerol 3-phosphate + 5-amino-1-(5-phospho-beta-D-ribosyl)imidazole-4-carboxamide + L-glutamate + H(+). Its pathway is amino-acid biosynthesis; L-histidine biosynthesis; L-histidine from 5-phospho-alpha-D-ribose 1-diphosphate: step 5/9. IGPS catalyzes the conversion of PRFAR and glutamine to IGP, AICAR and glutamate. The HisF subunit catalyzes the cyclization activity that produces IGP and AICAR from PRFAR using the ammonia provided by the HisH subunit. The sequence is that of Imidazole glycerol phosphate synthase subunit HisF from Stutzerimonas stutzeri (strain A1501) (Pseudomonas stutzeri).